Reading from the N-terminus, the 196-residue chain is Pyridoxal 5'-phosphate synthase subunit PdxT (196 aa).

47–49 (GES) is an L-glutamine binding site. Residue Cys79 is the Nucleophile of the active site. L-glutamine contacts are provided by residues Arg106 and 134 to 135 (IR). Residues His170 and Glu172 each act as charge relay system in the active site.

Belongs to the glutaminase PdxT/SNO family. In the presence of PdxS, forms a dodecamer of heterodimers. Only shows activity in the heterodimer.

It catalyses the reaction aldehydo-D-ribose 5-phosphate + D-glyceraldehyde 3-phosphate + L-glutamine = pyridoxal 5'-phosphate + L-glutamate + phosphate + 3 H2O + H(+). The catalysed reaction is L-glutamine + H2O = L-glutamate + NH4(+). Its pathway is cofactor biosynthesis; pyridoxal 5'-phosphate biosynthesis. Its function is as follows. Catalyzes the hydrolysis of glutamine to glutamate and ammonia as part of the biosynthesis of pyridoxal 5'-phosphate. The resulting ammonia molecule is channeled to the active site of PdxS. This chain is Pyridoxal 5'-phosphate synthase subunit PdxT, found in Bacillus anthracis (strain A0248).